An 821-amino-acid polypeptide reads, in one-letter code: BDNF/NT-3 growth factors receptor (821 aa).

Positions 1-31 (MSPWLKWHGPAMARLWGLCLLVLGFWRASLA) are cleaved as a signal peptide. Intrachain disulfides connect Cys-32-Cys-38 and Cys-36-Cys-45. Residues 32-61 (CPTSCKCSSARIWCTEPSPGIVAFPRLEPN) form the LRRNT domain. Over 32–429 (CPTSCKCSSA…DVADQSNREH (398 aa)) the chain is Extracellular. Asn-67, Asn-95, and Asn-121 each carry an N-linked (GlcNAc...) asparagine glycan. LRR repeat units follow at residues 92–113 (GLRN…AFLK) and 116–137 (NLRH…HFRH). In terms of domain architecture, LRRCT spans 148-196 (NPFTCSCDIMWLKTLQETKSSPDTQDLYCLNESSKNMPLANLQIPNCGL). 2 cysteine pairs are disulfide-bonded: Cys-152/Cys-176 and Cys-154/Cys-194. N-linked (GlcNAc...) asparagine glycosylation is found at Asn-178, Asn-205, Asn-241, Asn-254, Asn-280, Asn-325, Asn-338, Asn-350, and Asn-411. Ig-like C2-type domains follow at residues 197–282 (PSAR…VNLT) and 301–365 (WCIP…MAKN). A disulfide bond links Cys-218 and Cys-266. The cysteines at positions 302 and 345 are disulfide-linked. Residues 430–453 (LSVYAVVVIASVVGFCLLVMLLLL) traverse the membrane as a helical segment. The interval 454-465 (KLARHSKFGMKG) is interaction with MAPK8IP3/JIP3. At 454–821 (KLARHSKFGM…ASPVYLDILG (368 aa)) the chain is on the cytoplasmic side. The interval 474–497 (DDSASPLHHISNGSNTPSSSEGGP) is disordered. Over residues 484–494 (SNGSNTPSSSE) the composition is skewed to polar residues. Residue Tyr-515 is modified to Phosphotyrosine. A Protein kinase domain is found at 537 to 806 (IVLKRELGEG…KNIKSIHTLL (270 aa)). Residues 543–551 (LGEGAFGKV) and Lys-571 contribute to the ATP site. Asp-675 acts as the Proton acceptor in catalysis. Residues Tyr-701, Tyr-705, Tyr-706, and Tyr-816 each carry the phosphotyrosine; by autocatalysis modification.

Belongs to the protein kinase superfamily. Tyr protein kinase family. Insulin receptor subfamily. As to quaternary structure, exists in a dynamic equilibrium between monomeric (low affinity) and dimeric (high affinity) structures. Interacts (phosphorylated upon activation by BDNF) with SHC1; mediates SHC1 phosphorylation and activation. Interacts (phosphorylated upon activation by BDNF) with PLCG1 and/or PLCG2; mediates PLCG1 phosphorylation and activation. Interacts with SH2B1 and SH2B2. Interacts with NGFR; may regulate the ligand specificity of the receptor. Interacts with SORCS2; this interaction is important for normal targeting to post-synaptic densities in response to high-frequency stimulation. Interacts (phosphorylated upon ligand-binding) with SH2D1A; regulates NTRK2. Interacts with SQSTM1 and KIDINS220. Interacts (phosphorylated upon ligand-binding) with FRS2; activates the MAPK signaling pathway. Interacts with APPL1. Interacts with MAPK8IP3/JIP3 and KLC1; interaction with KLC1 is mediated by MAPK8IP3/JIP3. Interacts with SORL1; this interaction facilitates NTRK2 trafficking between synaptic plasma membranes, postsynaptic densities and cell soma, hence positively regulates BDNF signaling. Interacts with SLITRK2. Post-translationally, phosphorylated. Undergoes ligand-mediated autophosphorylation that is required for interaction with SHC1 and PLCG1 and other downstream effectors. Some isoforms are not phosphorylated. Ubiquitinated. Undergoes polyubiquitination upon activation; regulated by NGFR. Ubiquitination regulates the internalization of the receptor. As to expression, expressed in the brain, in neurons (at protein level). Detected in hippocampus (at protein level). Widely expressed in the central and peripheral nervous system. The different forms are differentially expressed in various cell types. Isoform GP95-TRKB is specifically expressed in glial cells.

The protein resides in the cell membrane. It localises to the endosome membrane. The protein localises to the early endosome membrane. Its subcellular location is the cell projection. It is found in the axon. The protein resides in the dendrite. It localises to the cytoplasm. The protein localises to the perinuclear region. Its subcellular location is the postsynaptic density. The catalysed reaction is L-tyrosyl-[protein] + ATP = O-phospho-L-tyrosyl-[protein] + ADP + H(+). With respect to regulation, the formation of active receptors dimers able to fully transduce the ligand-mediated signal, may be negatively regulated by the formation of inactive heterodimers with the non-catalytic isoforms. The neuronal activity and the influx of calcium positively regulate the kinase activity and the internalization of the receptor which are both important for active signaling. Regulated by NGFR that may control the internalization of the receptor. NGFR may also stimulate the activation by BDNF compared to NTF3 and NTF4. SH2D1A inhibits the autophosphorylation of the receptor, and alters the recruitment and activation of downstream effectors and signaling cascades. Receptor tyrosine kinase involved in the development and the maturation of the central and the peripheral nervous systems through regulation of neuron survival, proliferation, migration, differentiation, and synapse formation and plasticity. Receptor for BDNF/brain-derived neurotrophic factor and NTF4/neurotrophin-4. Alternatively can also bind NTF3/neurotrophin-3 which is less efficient in activating the receptor but regulates neuron survival through NTRK2. Upon ligand-binding, undergoes homodimerization, autophosphorylation and activation. Recruits, phosphorylates and/or activates several downstream effectors including SHC1, FRS2, SH2B1, SH2B2 and PLCG1 that regulate distinct overlapping signaling cascades. Through SHC1, FRS2, SH2B1, SH2B2 activates the GRB2-Ras-MAPK cascade that regulates for instance neuronal differentiation including neurite outgrowth. Through the same effectors controls the Ras-PI3 kinase-AKT1 signaling cascade that mainly regulates growth and survival. Through PLCG1 and the downstream protein kinase C-regulated pathways controls synaptic plasticity. Thereby, plays a role in learning and memory by regulating both short term synaptic function and long-term potentiation. PLCG1 also leads to NF-Kappa-B activation and the transcription of genes involved in cell survival. Hence, it is able to suppress anoikis, the apoptosis resulting from loss of cell-matrix interactions. Isoform GP95-TRKB may also play a role in neutrophin-dependent calcium signaling in glial cells and mediate communication between neurons and glia. This chain is BDNF/NT-3 growth factors receptor, found in Mus musculus (Mouse).